The primary structure comprises 310 residues: Prohibitin-2 (310 aa).

A helical; Signal-anchor for type II membrane protein membrane pass occupies residues 38–58 (FAGLGGLLLLGGGALFINNAL). The segment at 130 to 144 (DVVQLPTIYRTLGQD) is interaction with ATG8. The short motif at 138–141 (YRTL) is the AIM element. A coiled-coil region spans residues 212–253 (NAVEAKQIAQQDAQRAAFVVDKARQEKQGMVVRAQGEAKSAE).

Belongs to the prohibitin family. In terms of assembly, the mitochondrial prohibitin complex consists of two subunits (PHB1 and PHB2). The subunits assemble into a membrane-associated ring-shaped supercomplex of approximately 1 mDa. The mitochondrial prohibitin complex interacts with the m-AAA protease, a heterohexamer composed of YTA12/RCA1 and YTA10/AFG3. The mitochondrial prohibitin complex interacts with ATG8 and the interaction may support mitophagosome assembly. In terms of processing, the N-terminus is blocked.

The protein localises to the mitochondrion inner membrane. Prohibitin probably acts as a holdase/unfoldase for the stabilization of newly synthesized mitochondrial proteins. Involved in mitophagy; may act as an adapter for ATG8 that supports mitophagosome assembly. Negatively regulates the proteolytic processing of ATG32 via the i-AAA protease. Acts as a negative regulator of the m-AAA protease. This is Prohibitin-2 (PHB2) from Saccharomyces cerevisiae (strain ATCC 204508 / S288c) (Baker's yeast).